A 251-amino-acid polypeptide reads, in one-letter code: Ubiquinone/menaquinone biosynthesis C-methyltransferase UbiE (251 aa).

Residues Thr-74, Asp-95, and 123-124 (NA) contribute to the S-adenosyl-L-methionine site.

It belongs to the class I-like SAM-binding methyltransferase superfamily. MenG/UbiE family.

The enzyme catalyses a 2-demethylmenaquinol + S-adenosyl-L-methionine = a menaquinol + S-adenosyl-L-homocysteine + H(+). It carries out the reaction a 2-methoxy-6-(all-trans-polyprenyl)benzene-1,4-diol + S-adenosyl-L-methionine = a 5-methoxy-2-methyl-3-(all-trans-polyprenyl)benzene-1,4-diol + S-adenosyl-L-homocysteine + H(+). It participates in quinol/quinone metabolism; menaquinone biosynthesis; menaquinol from 1,4-dihydroxy-2-naphthoate: step 2/2. It functions in the pathway cofactor biosynthesis; ubiquinone biosynthesis. Functionally, methyltransferase required for the conversion of demethylmenaquinol (DMKH2) to menaquinol (MKH2) and the conversion of 2-polyprenyl-6-methoxy-1,4-benzoquinol (DDMQH2) to 2-polyprenyl-3-methyl-6-methoxy-1,4-benzoquinol (DMQH2). This chain is Ubiquinone/menaquinone biosynthesis C-methyltransferase UbiE, found in Shewanella piezotolerans (strain WP3 / JCM 13877).